The chain runs to 304 residues: Sulfate adenylyltransferase subunit 2 (304 aa).

This sequence belongs to the PAPS reductase family. CysD subfamily. Heterodimer composed of CysD, the smaller subunit, and CysN.

It carries out the reaction sulfate + ATP + H(+) = adenosine 5'-phosphosulfate + diphosphate. It functions in the pathway sulfur metabolism; hydrogen sulfide biosynthesis; sulfite from sulfate: step 1/3. With CysN forms the ATP sulfurylase (ATPS) that catalyzes the adenylation of sulfate producing adenosine 5'-phosphosulfate (APS) and diphosphate, the first enzymatic step in sulfur assimilation pathway. APS synthesis involves the formation of a high-energy phosphoric-sulfuric acid anhydride bond driven by GTP hydrolysis by CysN coupled to ATP hydrolysis by CysD. This Halorhodospira halophila (strain DSM 244 / SL1) (Ectothiorhodospira halophila (strain DSM 244 / SL1)) protein is Sulfate adenylyltransferase subunit 2.